Here is a 410-residue protein sequence, read N- to C-terminus: Lipid droplet-regulating VLDL assembly factor AUP1 (410 aa).

Position 1 is an N-acetylmethionine (methionine 1). Topologically, residues 1–20 (MEPPPAPGPERLFDSHRLPS) are cytoplasmic. The stretch at 21-41 (DGFLLLALLLYAPVGLCLLVL) is an intramembrane region. Residues 42-410 (RLFLGLHVFL…FRERQAQEAE (369 aa)) are Cytoplasmic-facing. The tract at residues 259-293 (LTPADKAEHMKRQRHPRLRPQSVQSSFPSPPSPSS) is disordered. Serine 292 is subject to Phosphoserine. Positions 296 to 338 (QLTILAQRVKEVLPHVPLNVIQRDLARTGCVDLTITNLLEGAV) constitute a CUE domain. The disordered stretch occupies residues 348 to 367 (GSQSLPTASAPKFPSSGLVT). Position 363 is a phosphoserine (serine 363). The residue at position 367 (threonine 367) is a Phosphothreonine.

This sequence belongs to the AUP1 family. Identified in a complex that contains SEL1L, OS9, FAF2/UBXD8, UBE2J1/UBC6E and AUP1. Interacts with the cytoplasmic tail of ITGA2B, ITGA1, ITGA2, ITGA5, ITGAV and ITGAM. Interacts (via C-terminus) with UBE2G2; the interaction recruits UBE2G2 to lipid droplets. Interacts with ubiquitin ligases AMFR/gp78 and RNF139/TRC8; this promotes interaction of UBE2G2 with AMFR and RNF139. Interacts with apolipoprotein APOB. Post-translationally, monoubiquitinated and diubiquitinated.

It is found in the endoplasmic reticulum membrane. It localises to the lipid droplet. Plays a role in the translocation of terminally misfolded proteins from the endoplasmic reticulum lumen to the cytoplasm and their degradation by the proteasome. Plays a role in lipid droplet formation. Induces lipid droplet clustering. Recruits ubiquitin-conjugating enzyme UBE2G2 to lipid droplets which facilitates its interaction with ubiquitin ligases AMFR/gp78 and RNF139/TRC8, leading to sterol-induced ubiquitination of HMGCR and its subsequent proteasomal degradation. Also required for the degradation of INSIG1, SREBF1 and SREBF2. Plays a role in regulating assembly and secretion of very low density lipoprotein particles and stability of apolipoprotein APOB. This chain is Lipid droplet-regulating VLDL assembly factor AUP1, found in Rattus norvegicus (Rat).